The chain runs to 268 residues: 5'-nucleotidase SurE (268 aa).

Positions 24, 25, 55, and 111 each coordinate a divalent metal cation.

It belongs to the SurE nucleotidase family. It depends on a divalent metal cation as a cofactor.

The protein resides in the cytoplasm. It carries out the reaction a ribonucleoside 5'-phosphate + H2O = a ribonucleoside + phosphate. Its function is as follows. Nucleotidase that shows phosphatase activity on nucleoside 5'-monophosphates. This Deinococcus radiodurans (strain ATCC 13939 / DSM 20539 / JCM 16871 / CCUG 27074 / LMG 4051 / NBRC 15346 / NCIMB 9279 / VKM B-1422 / R1) protein is 5'-nucleotidase SurE.